A 498-amino-acid polypeptide reads, in one-letter code: Glycerol kinase (498 aa).

Threonine 12 provides a ligand contact to ADP. The ATP site is built by threonine 12, threonine 13, and serine 14. Threonine 12 contributes to the sn-glycerol 3-phosphate binding site. Arginine 16 contacts ADP. The sn-glycerol 3-phosphate site is built by arginine 82, glutamate 83, tyrosine 134, and aspartate 243. Residues arginine 82, glutamate 83, tyrosine 134, aspartate 243, and glutamine 244 each coordinate glycerol. Positions 265 and 308 each coordinate ADP. Residues threonine 265, glycine 308, glutamine 312, and glycine 409 each coordinate ATP. The ADP site is built by glycine 409 and asparagine 413.

Belongs to the FGGY kinase family. In terms of assembly, homotetramer and homodimer (in equilibrium).

The enzyme catalyses glycerol + ATP = sn-glycerol 3-phosphate + ADP + H(+). It functions in the pathway polyol metabolism; glycerol degradation via glycerol kinase pathway; sn-glycerol 3-phosphate from glycerol: step 1/1. Activated by phosphorylation and inhibited by fructose 1,6-bisphosphate (FBP). Functionally, key enzyme in the regulation of glycerol uptake and metabolism. Catalyzes the phosphorylation of glycerol to yield sn-glycerol 3-phosphate. This chain is Glycerol kinase, found in Clostridium botulinum (strain Loch Maree / Type A3).